The primary structure comprises 71 residues: uncharacterized protein (71 aa).

The span at methionine 1–asparagine 16 shows a compositional bias: basic residues. 2 disordered regions span residues methionine 1–lysine 39 and lysine 51–alanine 71. Residues arginine 25–glycine 35 are compositionally biased toward polar residues. Basic and acidic residues predominate over residues lysine 51–phenylalanine 64.

This is an uncharacterized protein from Bacillus subtilis (strain 168).